The sequence spans 367 residues: Protein RecA (367 aa).

Residues 1–14 (MSTEVNANQSPNAE) are compositionally biased toward polar residues. A disordered region spans residues 1–24 (MSTEVNANQSPNAESRQEAARSGE). The span at 15–24 (SRQEAARSGE) shows a compositional bias: basic and acidic residues. 84–91 (GPESSGKT) is a binding site for ATP. A disordered region spans residues 348-367 (GSEVSSNSMRPLTTANRKAA). Residues 349–367 (SEVSSNSMRPLTTANRKAA) are compositionally biased toward polar residues.

Belongs to the RecA family.

It is found in the cytoplasm. In terms of biological role, can catalyze the hydrolysis of ATP in the presence of single-stranded DNA, the ATP-dependent uptake of single-stranded DNA by duplex DNA, and the ATP-dependent hybridization of homologous single-stranded DNAs. It interacts with LexA causing its activation and leading to its autocatalytic cleavage. In Prochlorococcus marinus (strain MIT 9211), this protein is Protein RecA.